A 677-amino-acid polypeptide reads, in one-letter code: Potassium channel KAT1 (677 aa).

Over 1-63 the chain is Cytoplasmic; the sequence is MSISWTRNFF…PFNPRYRAWE (63 aa). The helical transmembrane segment at 64-84 threads the bilayer; sequence MWLVLLVIYSAWICPFQFAFI. The Extracellular portion of the chain corresponds to 85–90; that stretch reads TYKKDA. Residues 91 to 111 form a helical membrane-spanning segment; that stretch reads IFIIDNIVNGFFAIDIILTFF. Over 112–134 the chain is Cytoplasmic; that stretch reads VAYLDSHSYLLVDSPKKIAIRYL. The chain crosses the membrane as a helical span at residues 135-155; sequence STWFAFDVCSTAPFQPLSLLF. Residues 156–165 are Extracellular-facing; the sequence is NYNGSELGFR. Residues 166 to 186 form a helical; Voltage-sensor membrane-spanning segment; it reads ILSMLRLWRLRRVSSLFARLE. Over 187 to 200 the chain is Cytoplasmic; it reads KDIRFNYFWIRCTK. A helical transmembrane segment spans residues 201–221; it reads LISVTLFAIHCAGCFNYLIAD. The Extracellular portion of the chain corresponds to 222–248; that stretch reads RYPNPRKTWIGAVYPNFKEASLWNRYV. The segment at residues 249–268 is an intramembrane region (pore-forming); sequence TALYWSITTLTTTGYGDFHA. Over 269–272 the chain is Extracellular; it reads ENPR. A helical membrane pass occupies residues 273 to 293; that stretch reads EMLFDIFFMMFNLGLTAYLIG. Residues 294–677 lie on the Cytoplasmic side of the membrane; that stretch reads NMTNLVVHWT…DGDHLYFSSN (384 aa). A nucleoside 3',5'-cyclic phosphate is bound at residue 377–496; it reads LFQGVSRNFL…RVIMNNLFMK (120 aa). Basic and acidic residues predominate over residues 568-577; it reads IERAKVERSS. Positions 568-601 are disordered; sequence IERAKVERSSSETAGRSYANDSSKKDPYCSSSNQ. In terms of domain architecture, KHA spans 612 to 677; the sequence is RVTIHMMSES…DGDHLYFSSN (66 aa).

The protein belongs to the potassium channel family. Plant (TC 1.A.1.4) subfamily. In terms of assembly, the potassium channel is probably composed of a homo- or heterotetrameric complex of pore-forming subunits. May interact with AKT2 and KAT2. Interacts with SLAC1 and SLAH3. As to expression, expressed in guard cells, and in roots.

Its subcellular location is the membrane. In terms of biological role, highly selective inward-rectifying potassium channel. This voltage-gated channel could mediate long-term potassium influx into guard cells leading to stomatal opening. Assuming opened or closed conformations in response to the voltage difference across the membrane, the channel is activated by hyperpolarization. The channel activity is enhanced upon external acidification. Also permeable to ammonium ions. Blocked by tetraethylammonium and barium ions. In Arabidopsis thaliana (Mouse-ear cress), this protein is Potassium channel KAT1 (KAT1).